We begin with the raw amino-acid sequence, 306 residues long: Methionyl-tRNA formyltransferase (306 aa).

(6S)-5,6,7,8-tetrahydrofolate is bound at residue 110–113; sequence SLLP.

Belongs to the Fmt family.

The catalysed reaction is L-methionyl-tRNA(fMet) + (6R)-10-formyltetrahydrofolate = N-formyl-L-methionyl-tRNA(fMet) + (6S)-5,6,7,8-tetrahydrofolate + H(+). Attaches a formyl group to the free amino group of methionyl-tRNA(fMet). The formyl group appears to play a dual role in the initiator identity of N-formylmethionyl-tRNA by promoting its recognition by IF2 and preventing the misappropriation of this tRNA by the elongation apparatus. The polypeptide is Methionyl-tRNA formyltransferase (Brucella anthropi (strain ATCC 49188 / DSM 6882 / CCUG 24695 / JCM 21032 / LMG 3331 / NBRC 15819 / NCTC 12168 / Alc 37) (Ochrobactrum anthropi)).